A 341-amino-acid chain; its full sequence is S-adenosylmethionine:tRNA ribosyltransferase-isomerase (341 aa).

This sequence belongs to the QueA family. As to quaternary structure, monomer.

The protein localises to the cytoplasm. It catalyses the reaction 7-aminomethyl-7-carbaguanosine(34) in tRNA + S-adenosyl-L-methionine = epoxyqueuosine(34) in tRNA + adenine + L-methionine + 2 H(+). Its pathway is tRNA modification; tRNA-queuosine biosynthesis. In terms of biological role, transfers and isomerizes the ribose moiety from AdoMet to the 7-aminomethyl group of 7-deazaguanine (preQ1-tRNA) to give epoxyqueuosine (oQ-tRNA). The polypeptide is S-adenosylmethionine:tRNA ribosyltransferase-isomerase (Thermoanaerobacter sp. (strain X514)).